A 245-amino-acid chain; its full sequence is 1-(5-phosphoribosyl)-5-[(5-phosphoribosylamino)methylideneamino] imidazole-4-carboxamide isomerase (245 aa).

Aspartate 7 acts as the Proton acceptor in catalysis. Aspartate 129 (proton donor) is an active-site residue.

It belongs to the HisA/HisF family.

It is found in the cytoplasm. The catalysed reaction is 1-(5-phospho-beta-D-ribosyl)-5-[(5-phospho-beta-D-ribosylamino)methylideneamino]imidazole-4-carboxamide = 5-[(5-phospho-1-deoxy-D-ribulos-1-ylimino)methylamino]-1-(5-phospho-beta-D-ribosyl)imidazole-4-carboxamide. The protein operates within amino-acid biosynthesis; L-histidine biosynthesis; L-histidine from 5-phospho-alpha-D-ribose 1-diphosphate: step 4/9. This chain is 1-(5-phosphoribosyl)-5-[(5-phosphoribosylamino)methylideneamino] imidazole-4-carboxamide isomerase, found in Escherichia coli O45:K1 (strain S88 / ExPEC).